A 683-amino-acid chain; its full sequence is Protein distal antenna (683 aa).

Positions 7-58 constitute an HTH psq-type domain; it reads TKGKRPLRSLTPRDKIHAIQRIHDGESKASVARDIGVPESTLRGWCKNEDKL. The H-T-H motif DNA-binding region spans 34-54; the sequence is KASVARDIGVPESTLRGWCKN. Disordered stretches follow at residues 220–255, 336–369, 443–525, 572–597, and 652–683; these read TANN…SVKN, SPPI…TPSG, SETP…SDCI, NQHS…DEEE, and EPQV…RRRK. The span at 227-242 shows a compositional bias: low complexity; sequence SKPSVQPPLQVQSPRS. Composition is skewed to polar residues over residues 338-352 and 445-460; these read PIRS…QHAQ and TPSV…NQLD. Acidic residues predominate over residues 462 to 478; the sequence is IEGDEVTDPDLDAEIEG. The segment covering 575 to 591 has biased composition (low complexity); it reads SNNNDISASNNNNNNSN.

As to quaternary structure, homomers. Interacts with itself, danr, ey and dac to form a complex (or complexes) containing the RD factors.

The protein resides in the nucleus. Its function is as follows. Probable transcription factor with a role in the retinal determination (RD) network. Regulates ato expression and is required for normal R8 induction and differentiation. Danr appears to repress Dan expression, but Dan is required for Danr expression anterior to the morphogenetic furrow (MF). Dan and Danr lie downstream of so and require dac function for highest levels of expression. Contributes to differentiation of antenna-specific characteristics; effector gene that acts downstream of homothorax (hth), Distal-less (Dll), cut (ct) and spineless (ss) genes to control differentiation of distal antennal structures. This chain is Protein distal antenna, found in Drosophila pseudoobscura pseudoobscura (Fruit fly).